The following is a 160-amino-acid chain: Variant surface antigen C (160 aa).

The N-terminal stretch at 1–29 (MKKSIFSKKLLVSFGSLVALASIPLIAIS) is a signal peptide. The N-palmitoyl cysteine moiety is linked to residue Cys30. Cys30 is lipidated: S-diacylglycerol cysteine. The interval 32–160 (QTNTDKSQQP…SSESGSQKTT (129 aa)) is disordered. Composition is skewed to low complexity over residues 38-54 (SQQP…QSGT) and 62-87 (SGTS…QTET). Repeat copies occupy residues 86 to 97 (ETAPKSPESGSQ), 98 to 109 (EATPKSPESGSQ), 110 to 121 (EATPKSPESGSQ), 122 to 133 (EAAPKSSESGSQ), 134 to 145 (EAAPKSSESGSQ), and 146 to 157 (EAAPKSSESGSQ). Residues 86–157 (ETAPKSPESG…APKSSESGSQ (72 aa)) form a 6 X 12 AA tandem repeats region. Residues 93–160 (ESGSQEATPK…SSESGSQKTT (68 aa)) show a composition bias toward polar residues.

The protein localises to the cell membrane. Functionally, responsible for the antigenic diversity for host adaptation. The polypeptide is Variant surface antigen C (vlpC) (Mesomycoplasma hyorhinis (Mycoplasma hyorhinis)).